The sequence spans 121 residues: Large ribosomal subunit protein bL12 (121 aa).

Belongs to the bacterial ribosomal protein bL12 family. As to quaternary structure, homodimer. Part of the ribosomal stalk of the 50S ribosomal subunit. Forms a multimeric L10(L12)X complex, where L10 forms an elongated spine to which 2 to 4 L12 dimers bind in a sequential fashion. Binds GTP-bound translation factors.

Functionally, forms part of the ribosomal stalk which helps the ribosome interact with GTP-bound translation factors. Is thus essential for accurate translation. The sequence is that of Large ribosomal subunit protein bL12 from Salmonella agona (strain SL483).